The primary structure comprises 448 residues: Glutamyl-tRNA reductase (448 aa).

Substrate contacts are provided by residues threonine 49 to arginine 52, serine 109, glutamate 114 to glutamine 116, and glutamine 120. Catalysis depends on cysteine 50, which acts as the Nucleophile. Residue glycine 189–serine 194 participates in NADP(+) binding.

This sequence belongs to the glutamyl-tRNA reductase family. As to quaternary structure, homodimer.

It catalyses the reaction (S)-4-amino-5-oxopentanoate + tRNA(Glu) + NADP(+) = L-glutamyl-tRNA(Glu) + NADPH + H(+). The protein operates within porphyrin-containing compound metabolism; protoporphyrin-IX biosynthesis; 5-aminolevulinate from L-glutamyl-tRNA(Glu): step 1/2. In terms of biological role, catalyzes the NADPH-dependent reduction of glutamyl-tRNA(Glu) to glutamate 1-semialdehyde (GSA). This is Glutamyl-tRNA reductase from Staphylococcus haemolyticus (strain JCSC1435).